The sequence spans 418 residues: Serine hydroxymethyltransferase (418 aa).

Residues Leu-117 and 121–123 (GHL) contribute to the (6S)-5,6,7,8-tetrahydrofolate site. An N6-(pyridoxal phosphate)lysine modification is found at Lys-225.

The protein belongs to the SHMT family. Homodimer. It depends on pyridoxal 5'-phosphate as a cofactor.

The protein resides in the cytoplasm. The catalysed reaction is (6R)-5,10-methylene-5,6,7,8-tetrahydrofolate + glycine + H2O = (6S)-5,6,7,8-tetrahydrofolate + L-serine. It functions in the pathway one-carbon metabolism; tetrahydrofolate interconversion. Its pathway is amino-acid biosynthesis; glycine biosynthesis; glycine from L-serine: step 1/1. In terms of biological role, catalyzes the reversible interconversion of serine and glycine with tetrahydrofolate (THF) serving as the one-carbon carrier. This reaction serves as the major source of one-carbon groups required for the biosynthesis of purines, thymidylate, methionine, and other important biomolecules. Also exhibits THF-independent aldolase activity toward beta-hydroxyamino acids, producing glycine and aldehydes, via a retro-aldol mechanism. This chain is Serine hydroxymethyltransferase, found in Mycoplasma mobile (strain ATCC 43663 / 163K / NCTC 11711) (Mesomycoplasma mobile).